The primary structure comprises 474 residues: ATP synthase subunit beta, chloroplastic (474 aa).

155–162 (GGAGVGKT) lines the ATP pocket.

Belongs to the ATPase alpha/beta chains family. In terms of assembly, F-type ATPases have 2 components, CF(1) - the catalytic core - and CF(0) - the membrane proton channel. CF(1) has five subunits: alpha(3), beta(3), gamma(1), delta(1), epsilon(1). CF(0) has four main subunits: a(1), b(1), b'(1) and c(9-12).

The protein localises to the plastid. It localises to the chloroplast thylakoid membrane. The enzyme catalyses ATP + H2O + 4 H(+)(in) = ADP + phosphate + 5 H(+)(out). Functionally, produces ATP from ADP in the presence of a proton gradient across the membrane. The catalytic sites are hosted primarily by the beta subunits. In Thalassiosira pseudonana (Marine diatom), this protein is ATP synthase subunit beta, chloroplastic.